A 1241-amino-acid chain; its full sequence is ATP-dependent helicase/nuclease subunit A (1241 aa).

The UvrD-like helicase ATP-binding domain occupies 12–485 (SQWTDDQWKA…IDLAKNFRSR (474 aa)). 33–40 (AAAGSGKT) is an ATP binding site. The UvrD-like helicase C-terminal domain maps to 505-805 (GEIDYDADAE…RIMTIHKSKG (301 aa)).

It belongs to the helicase family. AddA subfamily. Heterodimer of AddA and AddB/RexB. The cofactor is Mg(2+).

The catalysed reaction is Couples ATP hydrolysis with the unwinding of duplex DNA by translocating in the 3'-5' direction.. It catalyses the reaction ATP + H2O = ADP + phosphate + H(+). In terms of biological role, the heterodimer acts as both an ATP-dependent DNA helicase and an ATP-dependent, dual-direction single-stranded exonuclease. Recognizes the chi site generating a DNA molecule suitable for the initiation of homologous recombination. The AddA nuclease domain is required for chi fragment generation; this subunit has the helicase and 3' -&gt; 5' nuclease activities. The chain is ATP-dependent helicase/nuclease subunit A from Bacillus cereus (strain ATCC 14579 / DSM 31 / CCUG 7414 / JCM 2152 / NBRC 15305 / NCIMB 9373 / NCTC 2599 / NRRL B-3711).